A 181-amino-acid chain; its full sequence is Cyclic phosphodiesterase (181 aa).

His42 functions as the Proton donor/acceptor in the catalytic mechanism. Residue Thr44 participates in substrate binding. 2 disulfide bridges follow: Cys64–Cys177 and Cys104–Cys110. Residue His119 is the Proton donor/acceptor of the active site. Residues Ser121 and Tyr124 each coordinate substrate.

This sequence belongs to the 2H phosphoesterase superfamily. CPD1 family. Expressed in leaves, stems, roots, floral buds and germinating seeds.

The protein resides in the cytoplasm. It catalyses the reaction ADP-alpha-D-ribose 1'',2''-cyclic phosphate + H2O = ADP-alpha-D-ribose 1''-phosphate + H(+). The enzyme catalyses 2',3'-cyclophospho-AMP + H2O = adenosine 2'-phosphate + H(+). It carries out the reaction 2',3'-cyclophospho-GMP + H2O = guanosine 2'-phosphate + H(+). The catalysed reaction is 2',3'-cyclophospho-UMP + H2O = uridine 2'-phosphate + H(+). It catalyses the reaction 2',3'-cyclophospho-CMP + H2O = cytidine 2'-phosphate + H(+). Its activity is regulated as follows. Inhibited by Cu(2+) and Zn(2+) at 0.5 mM by 93 and 87% respectively. Not inhibited by Ca(2+), Mg(2+), Co(2+), Ni(2+), and EDTA at 0.5 mM. Hydrolyzes ADP-ribose 1'',2''-cyclic phosphate (Appr&gt;1) that is produced during tRNA splicing into ADP-ribose 1''-phosphate (Appr-1''p). Also acts on nucleoside 2',3'-cyclic phosphates. The protein is Cyclic phosphodiesterase of Arabidopsis thaliana (Mouse-ear cress).